Consider the following 893-residue polypeptide: Sperm-associated antigen 1 (893 aa).

Basic and acidic residues predominate over residues 112 to 126; that stretch reads ENTRHFHDPEKHPGV. The disordered stretch occupies residues 112–155; it reads ENTRHFHDPEKHPGVEDPLPPVRGSNSCPRGGKETSSKSKTAKK. TPR repeat units follow at residues 213–246, 247–279, and 280–313; these read ANRE…LPTA, TAYN…EPGN, and IKAL…EPDN. Disordered stretches follow at residues 324-344, 349-368, and 373-437; these read EREL…KRMV, ENSG…DDGV, and MGNI…SRGN. Residue Ser351 is modified to Phosphoserine. Residues 403-415 are compositionally biased toward polar residues; the sequence is QEGQPETGTASTS. Basic and acidic residues predominate over residues 416-437; the sequence is DNHDLEERRAADSPGDLKSRGN. TPR repeat units lie at residues 429 to 463, 471 to 504, 506 to 538, 605 to 638, and 639 to 672; these read PGDL…EPTG, SILY…QPFA, KPLL…DCRI, FQAL…NSKA, and CAIY…DSKN. 630 to 637 serves as a coordination point for GTP; that stretch reads ECLKINSK. The residue at position 703 (Ser703) is a Phosphoserine. A disordered region spans residues 704 to 756; it reads PDSSEAARHLDTKNDTAPPSRERERRRIEIQEVDDSSDEEPERPAEASAVEEG. Over residues 708 to 733 the composition is skewed to basic and acidic residues; that stretch reads EAARHLDTKNDTAPPSRERERRRIEI. Residues 734-744 show a composition bias toward acidic residues; sequence QEVDDSSDEEP. Phosphoserine occurs at positions 739, 740, and 758.

Testis and sperm.

The protein localises to the cytoplasm. It localises to the dynein axonemal particle. May play a role in the cytoplasmic assembly of the ciliary dynein arms. Binds GTP and has GTPase activity. Plays a role in fertilization. In Rattus norvegicus (Rat), this protein is Sperm-associated antigen 1 (Spag1).